Reading from the N-terminus, the 618-residue chain is Glucose starvation modulator protein 1 (618 aa).

The zn(2)-C6 fungal-type DNA-binding region spans 20 to 48; the sequence is CEFCHTKHIQCDVGRPCQNCLKRNIGKFC. The interval 325–353 is disordered; it reads ANANTQPSHNAKLESECDSSSHSDADLEK. The span at 335-353 shows a compositional bias: basic and acidic residues; that stretch reads AKLESECDSSSHSDADLEK. The 73-residue stretch at 466–538 folds into the PAS domain; the sequence is LLDLENMAKL…QIFNELLAFG (73 aa).

This sequence belongs to the ERT1/acuK family.

The protein localises to the nucleus. Its function is as follows. Transcription factor which regulates nonfermentable carbon utilization. Binds specifically to 5'-CGGN(8)CGG-3' and 5'-CGGN(9)CGG-3' sequences in the promoter region. This Saccharomyces cerevisiae (strain JAY291) (Baker's yeast) protein is Glucose starvation modulator protein 1 (GSM1).